An 85-amino-acid polypeptide reads, in one-letter code: uncharacterized protein (85 aa).

The segment covering 64-76 (DPPVRRSGGREQH) has biased composition (basic and acidic residues). The interval 64–85 (DPPVRRSGGREQHLAQVWRATS) is disordered.

This is an uncharacterized protein from Mycobacterium bovis (strain ATCC BAA-935 / AF2122/97).